A 205-amino-acid polypeptide reads, in one-letter code: Transcription termination/antitermination protein NusG (205 aa).

The KOW domain occupies 154–178 (GDHIMVLSGPFKDFEGDVIEVSPER).

This sequence belongs to the NusG family.

Participates in transcription elongation, termination and antitermination. This is Transcription termination/antitermination protein NusG from Synechocystis sp. (strain ATCC 27184 / PCC 6803 / Kazusa).